The chain runs to 521 residues: CD166 antigen (521 aa).

At 1–465 (GSPVFIAFRS…NREQVNHRAT (465 aa)) the chain is on the extracellular side. N-linked (GlcNAc...) asparagine glycosylation is found at N33, N105, N244, N299, N395, N418, and N437. The 110-residue stretch at 63–172 (PTIVKVFKQP…YGPSGQKTVQ (110 aa)) folds into the Ig-like V-type 2 domain. Intrachain disulfides connect C95–C158, C208–C251, C292–C330, and C373–C423. 3 Ig-like C2-type domains span residues 183-266 (PTEQ…TAIT), 271-347 (DLSL…ESLT), and 354-439 (PQIK…LNVS). A helical membrane pass occupies residues 466–487 (LIVGIVLRLLHGALVAGVVYWL). The Cytoplasmic portion of the chain corresponds to 488 to 521 (YVKKSKTASKHVNKDLGNLEENKKLEQNNHRTEA). A disordered region spans residues 500-521 (NKDLGNLEENKKLEQNNHRTEA). Residues 507-521 (EENKKLEQNNHRTEA) are compositionally biased toward basic and acidic residues.

As to quaternary structure, homodimer. Interacts (via extracellular domain) with CD6 (via extracellular domain). Homodimerization and interaction with CD6 involve the same region and cannot occur simultaneously. The affinity for CD6 is much higher than the affinity for self-association. Interacts (via glycosylated extracellular domain) with LGALS1 and LGALS3. Interaction with LGALS1 or LGALS3 inhibits interaction with CD6. In terms of processing, glycosylated.

It localises to the cell membrane. Its subcellular location is the cell projection. The protein resides in the axon. It is found in the dendrite. Cell adhesion molecule that mediates both heterotypic cell-cell contacts via its interaction with CD6, as well as homotypic cell-cell contacts. Promotes T-cell activation and proliferation via its interactions with CD6. Contributes to the formation and maturation of the immunological synapse via its interactions with CD6. Mediates homotypic interactions with cells that express ALCAM. Mediates attachment of dendritic cells onto endothelial cells via homotypic interaction. Inhibits endothelial cell migration and promotes endothelial tube formation via homotypic interactions. Required for normal organization of the lymph vessel network. Required for normal hematopoietic stem cell engraftment in the bone marrow. Plays a role in hematopoiesis; required for normal numbers of hematopoietic stem cells in bone marrow. Promotes in vitro osteoblast proliferation and differentiation. Promotes neurite extension, axon growth and axon guidance; axons grow preferentially on surfaces that contain ALCAM. Mediates outgrowth and pathfinding for retinal ganglion cell axons. This is CD166 antigen (ALCAM) from Canis lupus familiaris (Dog).